A 463-amino-acid chain; its full sequence is ATP-dependent protease ATPase subunit HslU (463 aa).

ATP is bound by residues Ile-19, Gly-61–Glu-66, Asp-277, Glu-341, and Arg-413.

It belongs to the ClpX chaperone family. HslU subfamily. As to quaternary structure, a double ring-shaped homohexamer of HslV is capped on each side by a ring-shaped HslU homohexamer. The assembly of the HslU/HslV complex is dependent on binding of ATP.

The protein localises to the cytoplasm. Its function is as follows. ATPase subunit of a proteasome-like degradation complex; this subunit has chaperone activity. The binding of ATP and its subsequent hydrolysis by HslU are essential for unfolding of protein substrates subsequently hydrolyzed by HslV. HslU recognizes the N-terminal part of its protein substrates and unfolds these before they are guided to HslV for hydrolysis. The chain is ATP-dependent protease ATPase subunit HslU from Bacillus cereus (strain B4264).